The following is a 233-amino-acid chain: Small ribosomal subunit protein eS4 (233 aa).

The 63-residue stretch at 37–99 (VPLVVVLRDV…RDEYYRVFPD (63 aa)) folds into the S4 RNA-binding domain.

It belongs to the eukaryotic ribosomal protein eS4 family.

This is Small ribosomal subunit protein eS4 from Halobacterium salinarum (strain ATCC 29341 / DSM 671 / R1).